Here is a 338-residue protein sequence, read N- to C-terminus: Glycerol-3-phosphate dehydrogenase [NAD(P)+] (338 aa).

The NADPH site is built by Ser-14, Tyr-15, His-35, and Lys-109. Residues Lys-109, Gly-138, and Thr-140 each coordinate sn-glycerol 3-phosphate. Ala-142 provides a ligand contact to NADPH. Sn-glycerol 3-phosphate contacts are provided by Lys-194, Asp-247, Ser-257, Arg-258, and Asn-259. Lys-194 acts as the Proton acceptor in catalysis. Arg-258 contacts NADPH. Residues Val-282 and Glu-284 each contribute to the NADPH site.

Belongs to the NAD-dependent glycerol-3-phosphate dehydrogenase family.

Its subcellular location is the cytoplasm. It catalyses the reaction sn-glycerol 3-phosphate + NAD(+) = dihydroxyacetone phosphate + NADH + H(+). The enzyme catalyses sn-glycerol 3-phosphate + NADP(+) = dihydroxyacetone phosphate + NADPH + H(+). The protein operates within membrane lipid metabolism; glycerophospholipid metabolism. Its function is as follows. Catalyzes the reduction of the glycolytic intermediate dihydroxyacetone phosphate (DHAP) to sn-glycerol 3-phosphate (G3P), the key precursor for phospholipid synthesis. In Shewanella baltica (strain OS155 / ATCC BAA-1091), this protein is Glycerol-3-phosphate dehydrogenase [NAD(P)+].